Consider the following 395-residue polypeptide: Ribosomal RNA large subunit methyltransferase I (395 aa).

Residues 2 to 79 (SSRVTLHPGR…QNESVDNGFF (78 aa)) enclose the PUA domain.

This sequence belongs to the methyltransferase superfamily. RlmI family.

The protein localises to the cytoplasm. The catalysed reaction is cytidine(1962) in 23S rRNA + S-adenosyl-L-methionine = 5-methylcytidine(1962) in 23S rRNA + S-adenosyl-L-homocysteine + H(+). Functionally, specifically methylates the cytosine at position 1962 (m5C1962) of 23S rRNA. The sequence is that of Ribosomal RNA large subunit methyltransferase I from Pseudoalteromonas atlantica (strain T6c / ATCC BAA-1087).